Here is a 460-residue protein sequence, read N- to C-terminus: MLQIHNSLTRRKETFTPMEPGRVRMYVCGMTVYDYCHLGHARVLVVFDVVYRYLKALGFDVTYIRNITDIDDKIIRRAAENGEDIRALTDRFIAAMHEDAEALGVLPPSAEPRATEHIDGMLAMIGTLVERGYAYAGDNGDVYYAVAKFEPYGRLSGKRLEDLRAGERVAPDEAKRDPLDFVLWKAAKPGEPAWDSPWGPGRPGWHIECSAMSTHYLGNHFDIHGGGQDLQFPHHENEIAQSEAATCEHFVNYWMHNGFVRVNEEKMSKSLGNFFTVREVLARYPAEVVRYFILSSHYRSPLNYSDEPLDAARAGLTRLYTALRGVQAVDPAGQGEGYRRRFQAAMDDDFNTPVAMAVLFDIARELNRLRDEDPAGAAPLAGLLRELGGMLGLLAGDPEAFLKGGEAGDLDEAAIEALIAQRLAARKAKDFAEADRIRDELAGQGVVLEDGPGGTTWRRG.

Zn(2+) is bound at residue C28. Positions 30-40 (MTVYDYCHLGH) match the 'HIGH' region motif. Zn(2+)-binding residues include C209, H234, and E238. The 'KMSKS' region motif lies at 266 to 270 (KMSKS). K269 lines the ATP pocket.

The protein belongs to the class-I aminoacyl-tRNA synthetase family. As to quaternary structure, monomer. Requires Zn(2+) as cofactor.

The protein localises to the cytoplasm. It catalyses the reaction tRNA(Cys) + L-cysteine + ATP = L-cysteinyl-tRNA(Cys) + AMP + diphosphate. This chain is Cysteine--tRNA ligase, found in Thioalkalivibrio sulfidiphilus (strain HL-EbGR7).